Here is a 123-residue protein sequence, read N- to C-terminus: NADH-quinone oxidoreductase subunit A (123 aa).

3 consecutive transmembrane segments (helical) span residues 11–31 (YLPI…IMML), 68–88 (LVAI…PWAI), and 93–113 (IGKI…IGFI).

This sequence belongs to the complex I subunit 3 family. In terms of assembly, NDH-1 is composed of 14 different subunits. Subunits NuoA, H, J, K, L, M, N constitute the membrane sector of the complex.

It is found in the cell inner membrane. It catalyses the reaction a quinone + NADH + 5 H(+)(in) = a quinol + NAD(+) + 4 H(+)(out). In terms of biological role, NDH-1 shuttles electrons from NADH, via FMN and iron-sulfur (Fe-S) centers, to quinones in the respiratory chain. The immediate electron acceptor for the enzyme in this species is believed to be ubiquinone. Couples the redox reaction to proton translocation (for every two electrons transferred, four hydrogen ions are translocated across the cytoplasmic membrane), and thus conserves the redox energy in a proton gradient. This is NADH-quinone oxidoreductase subunit A from Rickettsia typhi (strain ATCC VR-144 / Wilmington).